We begin with the raw amino-acid sequence, 373 residues long: Flagellar P-ring protein (373 aa).

The N-terminal stretch at 1–30 (MTNRWSFDVNKNLVTVLFTWLCLSISTAHA) is a signal peptide.

It belongs to the FlgI family. In terms of assembly, the basal body constitutes a major portion of the flagellar organelle and consists of four rings (L,P,S, and M) mounted on a central rod.

It is found in the periplasm. The protein resides in the bacterial flagellum basal body. Its function is as follows. Assembles around the rod to form the L-ring and probably protects the motor/basal body from shearing forces during rotation. In Aliivibrio fischeri (strain ATCC 700601 / ES114) (Vibrio fischeri), this protein is Flagellar P-ring protein.